Consider the following 770-residue polypeptide: MFPQSRHPTPHQAAGQPFKFTIPESLDRIKEEFQFLQAQYHSLKLECEKLASEKTEMQRHYVMYYEMSYGLNIEMHKQTEIAKRLNTICAQVIPFLSQEHQQQVAQAVERAKQVTMAELNAIIGQQQLQAQHLSHGHGPPVPLTPHPSGLQPPGIPPLGGSASLLALSSALSGQSHLAIKDDKKHHDAERHRDRESGTSNSLLVPDSLRSTDKRRNGPEFSSDIKKRKVDDKDNYDSDGDKSDDNLVVDVSNEDPSSPHASPTHSPRENGIDKNRLLKKDASGSPASTASSGSSSSLKSKEVSLHEKANTPVLKSSTPTPRSDMPTPGTSATPGLRPGLGKPPAMEPLVNQAAAGLRTPLAVPGPYPAPFGMVPHAGMNGELTSPGAAYAGLHSMSPQMSAAAAAAAAAVVAYGRSPMVGFDPPPHMRVPSIPPNLAGIPGGKPAYSFHVTADGQMQPVPFPPDALIGPGIPRHARQINTLNHGEVVCAVTISNPTRHVYTGGKGCVKVWDISHPGNKSPVSQLDCLNRDNYIRSCKLLPDGCTLIVGGEASTLSIWDLAAPTPRIKAELTSSAPACYALAISPDSKVCFSCCSDGNIAVWDLHNQTLVRQFQGHTDGASCIDISNDGTKLWTGGLDNTVRSWDLREGRQLQQHDFTSQIFSLGYCPTGEWLAVGMESSNVEVLHVNKPDKYQLHLHESCVLSLKFAYCGKWFVSTGKDNLLNAWRTPYGASIFQSKESSSVLSCDISVDDKYIVTGSGDKKATVYEVIY.

Residues M1–Q131 are q domain. Disordered regions lie at residues L128 to P157 and H176 to E346. The segment at H132–S199 is GP domain. Residues H146–P157 show a composition bias toward low complexity. Composition is skewed to basic and acidic residues over residues A178–S196 and R209–D244. The interval N200–P266 is ccN domain. A Nuclear localization signal motif is present at residues K225–K228. S237 is subject to Phosphoserine; by CK2. Over residues P255–H264 the composition is skewed to low complexity. Phosphoserine; by CDK1 occurs at positions 257, 261, and 265. The segment covering S265 to A281 has biased composition (basic and acidic residues). The interval R267–V450 is SP domain. Residues S282–L297 are compositionally biased toward low complexity. A Phosphoserine modification is found at S284. A compositionally biased stretch (basic and acidic residues) spans K298–A308. 6 WD repeats span residues G470–T501, N528–D558, S572–D602, G614–D644, L696–R726, and K737–E767.

It belongs to the WD repeat Groucho/TLE family. In terms of assembly, homooligomer and heterooligomer with other family members. Binds RUNX1, RUNX3, FOXA2, KDM6A, UTY, histone H3, HESX1, ESRRG and the NF-kappa-B subunit RELA. Interacts with HES1 (via WRPW motif). Binds TCF7, LEF1, TCF7L1 and TCF7L2. Interacts with SIX3. Interacts with EFNB1. Interacts with TLE4. Interacts with FOXG1/BF-1; the interaction is inhibited by TLE6/GRG6. In terms of processing, phosphorylated, probably by CDK1. The degree of phosphorylation varies throughout the cell cycle, and is highest at the G2/M transition. Becomes hyperphosphorylated in response to cell differentiation and interaction with HES1 or RUNX1. Post-translationally, ubiquitinated by XIAP/BIRC4. As to expression, highly expressed in liver and lung. Detected at slightly lower levels in heart, brain, kidney and testis. Detected in fetal and adult stomach and small intestine, in adult ileum, duodenum and colon. Expressed in bone marrow-derived macrophages. In terms of tissue distribution, most abundant at the base of the crypts of Lieberkuhn in the small intestine.

It localises to the nucleus. The protein localises to the cytoplasm. Its function is as follows. Transcriptional corepressor that binds to a number of transcription factors. Inhibits NF-kappa-B-regulated gene expression. Inhibits the transcriptional activation mediated by FOXA2, and by CTNNB1 and TCF family members in Wnt signaling. Enhances FOXG1/BF-1- and HES1-mediated transcriptional repression. The effects of full-length TLE family members may be modulated by association with dominant-negative AES. Unusual function as coactivator for ESRRG. The polypeptide is Transducin-like enhancer protein 1 (Tle1) (Mus musculus (Mouse)).